We begin with the raw amino-acid sequence, 151 residues long: MRALVQRVSEASVVVEGQVVGAVERGLLVLLAVERGDGEKQLEEMVRKVARLRIFPDEAGKMNLSVKDIEGEVLVVSQFTLAADMRKGYRPSFSLAEEPKRAEALYLDYCQRLNQHEGVVVAQGLFGADMQVKLINDGPVTIWLDLPPQEG.

The Gly-cisPro motif, important for rejection of L-amino acids signature appears at 138-139 (GP).

Belongs to the DTD family. In terms of assembly, homodimer.

It localises to the cytoplasm. It catalyses the reaction glycyl-tRNA(Ala) + H2O = tRNA(Ala) + glycine + H(+). It carries out the reaction a D-aminoacyl-tRNA + H2O = a tRNA + a D-alpha-amino acid + H(+). In terms of biological role, an aminoacyl-tRNA editing enzyme that deacylates mischarged D-aminoacyl-tRNAs. Also deacylates mischarged glycyl-tRNA(Ala), protecting cells against glycine mischarging by AlaRS. Acts via tRNA-based rather than protein-based catalysis; rejects L-amino acids rather than detecting D-amino acids in the active site. By recycling D-aminoacyl-tRNA to D-amino acids and free tRNA molecules, this enzyme counteracts the toxicity associated with the formation of D-aminoacyl-tRNA entities in vivo and helps enforce protein L-homochirality. The polypeptide is D-aminoacyl-tRNA deacylase (Magnetococcus marinus (strain ATCC BAA-1437 / JCM 17883 / MC-1)).